A 664-amino-acid chain; its full sequence is Transketolase 1 (664 aa).

A substrate-binding site is contributed by histidine 26. Thiamine diphosphate is bound by residues histidine 66 and 114–116 (GPL). Aspartate 155 serves as a coordination point for Mg(2+). Thiamine diphosphate-binding residues include glycine 156 and asparagine 185. The Mg(2+) site is built by asparagine 185 and isoleucine 187. Residues histidine 260, arginine 357, and serine 384 each coordinate substrate. Histidine 260 contributes to the thiamine diphosphate binding site. Catalysis depends on glutamate 411, which acts as the Proton donor. Position 437 (phenylalanine 437) interacts with thiamine diphosphate. Residues histidine 461, aspartate 469, and arginine 520 each coordinate substrate.

This sequence belongs to the transketolase family. In terms of assembly, homodimer. Mg(2+) serves as cofactor. It depends on Ca(2+) as a cofactor. The cofactor is Mn(2+). Requires Co(2+) as cofactor. Thiamine diphosphate is required as a cofactor.

It catalyses the reaction D-sedoheptulose 7-phosphate + D-glyceraldehyde 3-phosphate = aldehydo-D-ribose 5-phosphate + D-xylulose 5-phosphate. Catalyzes the transfer of a two-carbon ketol group from a ketose donor to an aldose acceptor, via a covalent intermediate with the cofactor thiamine pyrophosphate. In Vibrio vulnificus (strain CMCP6), this protein is Transketolase 1 (tkt1).